A 494-amino-acid chain; its full sequence is Cysteine protease ATG4 (494 aa).

An APEAR motif is present at residues 102–105 (FVPI). Cysteine 147 functions as the Nucleophile in the catalytic mechanism. At serine 307 the chain carries Phosphoserine. Residues aspartate 322 and histidine 324 contribute to the active site. Cysteines 338 and 394 form a disulfide. An LIR motif is present at residues 424–427 (YVDI). Serine 488 carries the post-translational modification Phosphoserine.

Belongs to the peptidase C54 family. As to quaternary structure, interacts with ATG8. Interacts with TUB1 and TUB2. In terms of processing, phosphorylation at Ser-307 by ATG1 inhibits autophagy: it takes place on autophagosome membranes and decreases its interaction with ATG8, thereby impairing deconjugation of PE-conjugated forms of ATG8. Post-translationally, formation of a disulfide bond between Cys-338 and Cys-394 leads to reduced autophagy. The disulfide bond is reduced by thioredoxin.

Its subcellular location is the cytoplasm. It localises to the nucleus. The protein resides in the preautophagosomal structure. It carries out the reaction [protein]-C-terminal L-amino acid-glycyl-phosphatidylethanolamide + H2O = [protein]-C-terminal L-amino acid-glycine + a 1,2-diacyl-sn-glycero-3-phosphoethanolamine. In terms of biological role, cysteine protease that plays a key role in cytoplasm to vacuole transport (Cvt) and autophagy by mediating both proteolytic activation and delipidation of ATG8. Required for selective autophagic degradation of the nucleus (nucleophagy) as well as for mitophagy which contributes to regulate mitochondrial quantity and quality by eliminating the mitochondria to a basal level to fulfill cellular energy requirements and preventing excess ROS production. The protease activity is required for proteolytic activation of ATG8: cleaves the C-terminal amino acid of ATG8 to reveal a C-terminal glycine. ATG8 ubiquitin-like activity requires the exposure of the glycine at the C-terminus for its conjugation to phosphatidylethanolamine (PE) and its insertion to membranes, which is necessary for autophagy. The ATG8-PE conjugate mediates tethering between adjacent membranes and stimulates membrane hemifusion, leading to expansion of the autophagosomal membrane during autophagy. In addition to the protease activity, also catalyzes deconjugation of PE-conjugated forms of ATG8 during macroautophagy: ATG8 delipidation is required to release the protein from membranes, which facilitates multiple events during macroautophagy, and especially for efficient autophagosome biogenesis, the assembly of ATG9-containing tubulovesicular clusters into phagophores/autophagosomes, and for the disassembly of PAS-associated ATG components. ATG8 delipidation by ATG4 also recycles ATG8-PE generated on inappropriate membranes to maintain a reservoir of unlipidated ATG8 that is required for autophagosome formation at the PAS. In Saccharomyces cerevisiae (strain YJM789) (Baker's yeast), this protein is Cysteine protease ATG4 (ATG4).